Here is a 345-residue protein sequence, read N- to C-terminus: Phosphoribosylformylglycinamidine cyclo-ligase (345 aa).

This sequence belongs to the AIR synthase family.

The protein resides in the cytoplasm. The catalysed reaction is 2-formamido-N(1)-(5-O-phospho-beta-D-ribosyl)acetamidine + ATP = 5-amino-1-(5-phospho-beta-D-ribosyl)imidazole + ADP + phosphate + H(+). Its pathway is purine metabolism; IMP biosynthesis via de novo pathway; 5-amino-1-(5-phospho-D-ribosyl)imidazole from N(2)-formyl-N(1)-(5-phospho-D-ribosyl)glycinamide: step 2/2. This Shewanella sp. (strain ANA-3) protein is Phosphoribosylformylglycinamidine cyclo-ligase.